The chain runs to 578 residues: Proline--tRNA ligase (578 aa).

It belongs to the class-II aminoacyl-tRNA synthetase family. ProS type 1 subfamily. As to quaternary structure, homodimer.

The protein localises to the cytoplasm. It catalyses the reaction tRNA(Pro) + L-proline + ATP = L-prolyl-tRNA(Pro) + AMP + diphosphate. Functionally, catalyzes the attachment of proline to tRNA(Pro) in a two-step reaction: proline is first activated by ATP to form Pro-AMP and then transferred to the acceptor end of tRNA(Pro). As ProRS can inadvertently accommodate and process non-cognate amino acids such as alanine and cysteine, to avoid such errors it has two additional distinct editing activities against alanine. One activity is designated as 'pretransfer' editing and involves the tRNA(Pro)-independent hydrolysis of activated Ala-AMP. The other activity is designated 'posttransfer' editing and involves deacylation of mischarged Ala-tRNA(Pro). The misacylated Cys-tRNA(Pro) is not edited by ProRS. The protein is Proline--tRNA ligase of Paraburkholderia xenovorans (strain LB400).